We begin with the raw amino-acid sequence, 271 residues long: MPIITKISTQKRKGRYNIFIDNEYAFSVSERTLAEKRLLKGTELSLEDIEKIKKAEADSHALQLAMSYLSYQPRSVYEVLTYLNKQGISPEASQSAIENLIELNYLDDNNFARLFIQNNLRVGKDGPRSISSKLKQKGVANDIIQDSLYEVDDEEWIEAGMRLIHSIGHQVGKMSYKEIKQKALKKLQTHGFNQELGELVVDQLDLESTEDDQLEALKKQGIKAWRRYRRDDDFKRRQKVKRYLFQHGFSSGEIDSFLSGEVVNLEEIDEY.

The protein belongs to the RecX family.

The protein resides in the cytoplasm. Its function is as follows. Modulates RecA activity. This Lactobacillus johnsonii (strain CNCM I-12250 / La1 / NCC 533) protein is Regulatory protein RecX.